A 67-amino-acid polypeptide reads, in one-letter code: Small ribosomal subunit protein eS17 (67 aa).

It belongs to the eukaryotic ribosomal protein eS17 family. In terms of assembly, part of the 30S ribosomal subunit.

The protein is Small ribosomal subunit protein eS17 of Pyrococcus furiosus (strain ATCC 43587 / DSM 3638 / JCM 8422 / Vc1).